A 106-amino-acid polypeptide reads, in one-letter code: Nucleoid-associated protein Nham_0463 (106 aa).

This sequence belongs to the YbaB/EbfC family. In terms of assembly, homodimer.

It is found in the cytoplasm. The protein localises to the nucleoid. Functionally, binds to DNA and alters its conformation. May be involved in regulation of gene expression, nucleoid organization and DNA protection. In Nitrobacter hamburgensis (strain DSM 10229 / NCIMB 13809 / X14), this protein is Nucleoid-associated protein Nham_0463.